Reading from the N-terminus, the 432-residue chain is MLGLEKPLSSDISSSSTDTSAISPISVSSMPLSPDKEKKKIKFIRYNPDIPQIVTSFKGYQKLMYQGYRYNIYQVVPEKNFKSWRCVCAKKMPDDGQWCKCRAETTSDNSNACTKNTHNHPPKHRVAEIEFIKSQLINAAFENPDHDAGDLINQACMYLSEGVSFDNKESLKKSLVSARNKEGKPRKPKSKTSTNPLKRMKIEIEEEDENVFKMQRMDNDITGFLPLLNNSISMVKVESPFSTTPTIQIPPPNPPQIHQPQEHSNLLQPAALNGFNNSWMGGIEDPIAMFWANAMLNPSGLDVLSTIAALSKHQLHSQGPTQAATAPAAPLSSNLSVSSFTPQMPKEASMAIPPTQILNLKDLKPLPPLAAIQTSPVIQAASLLRPIPMKNDMGTQTVEEIKVSRCLTSGCGCRVIRICCCDEGRCRRAAAC.

A disordered region spans residues 1-33 (MLGLEKPLSSDISSSSTDTSAISPISVSSMPLS). Over residues 9–26 (SSDISSSSTDTSAISPIS) the composition is skewed to low complexity. Positions 30–188 (MPLSPDKEKK…RNKEGKPRKP (159 aa)) form a DNA-binding region, required for DNA-binding. An FLYWCH-type zinc finger spans residues 53 to 120 (IVTSFKGYQK…NACTKNTHNH (68 aa)). The tract at residues 174-195 (SLVSARNKEGKPRKPKSKTSTN) is disordered.

It is found in the nucleus. Its function is as follows. Putative transcription factor. Binds to specific sequence motif 5'-[TC][AGT]TGCC[GA][AT]-3' in regulatory elements of target genes such as myosin myo-2. May modulate gene expression, perhaps acting in opposition to transcription factor pha-4. Involved in morphogenesis, perhaps especially in formation of the pharynx. Plays roles in molting, feeding and morphology. This Caenorhabditis briggsae protein is FLYWCH-type zinc finger-containing protein peb-1.